The sequence spans 100 residues: MANDLKLILELSAGAELLFGNIKRRQLSLDGSQKWTIGSLLKWMHANILTRSPELFIQGDTVRPGILVLVNDTDWELLGGLDYELQQNDNILFISTLHGG.

Position 100 is a 1-thioglycine (glycine 100). Glycine 100 is covalently cross-linked (Glycyl lysine isopeptide (Gly-Lys) (interchain with K-? in acceptor proteins)).

This sequence belongs to the URM1 family. Interacts with cer. C-terminal thiocarboxylation occurs in 2 steps, it is first acyl-adenylated (-COAMP) via the hesA/moeB/thiF part of the MOCS3 homolog, then thiocarboxylated (-COSH) via the rhodanese domain of the MOCS3 homolog.

It is found in the cytoplasm. It participates in tRNA modification; 5-methoxycarbonylmethyl-2-thiouridine-tRNA biosynthesis. Functionally, acts as a sulfur carrier required for 2-thiolation of mcm(5)S(2)U at tRNA wobble positions of cytosolic tRNA(Lys), tRNA(Glu) and tRNA(Gln). Serves as sulfur donor in tRNA 2-thiolation reaction by being thiocarboxylated (-COSH) at its C-terminus by MOCS3. The sulfur is then transferred to tRNA to form 2-thiolation of mcm(5)S(2)U. Also acts as a ubiquitin-like protein (UBL) that is covalently conjugated via an isopeptide bond to lysine residues of target proteins such as Prx2/Jafrac1, Ciao1, Eip71CD and GILT1. The thiocarboxylated form serves as substrate for conjugation and oxidative stress specifically induces the formation of UBL-protein conjugates. The sequence is that of Ubiquitin-related modifier 1 homolog from Drosophila willistoni (Fruit fly).